Here is a 475-residue protein sequence, read N- to C-terminus: Putative aldehyde dehydrogenase (475 aa).

NAD(+) is bound by residues 146 to 147 (WN) and 223 to 224 (GS). E245 functions as the Proton acceptor in the catalytic mechanism. Residue L246 participates in NAD(+) binding. C279 functions as the Nucleophile in the catalytic mechanism. E379 contacts NAD(+).

This sequence belongs to the aldehyde dehydrogenase family.

It catalyses the reaction an aldehyde + NAD(+) + H2O = a carboxylate + NADH + 2 H(+). The sequence is that of Putative aldehyde dehydrogenase from Staphylococcus aureus (strain USA300).